The chain runs to 1139 residues: Protein lin-25 (1139 aa).

A Nuclear localization signal motif is present at residues 695–701 (IKKKKDP).

As to expression, expressed in seam cells and all six vulva precursor cells (VPC). After VPC division, expression is restricted to descendants of the VPC cell lineages P5.p, P6.p and P7.p (at protein level).

It is found in the nucleus. It localises to the cytoplasm. In terms of biological role, participates in the inductive signaling pathway downstream of let-60 Ras and the RAF/MAP kinase cascade to regulate specification and differentiation of many cell types. Positively regulates the fate of vulval precursor cells. Required for induction of the P12 and excretory duct cell fates. In males, it is also required for proper formation of spicules. Does not function in the signaling pathway that promotes exit from pachytene. Plays a role in responses to M.nematophilum-mediated bacterial infection by promoting tail swelling and preventing constipation. This is Protein lin-25 (lin-25) from Caenorhabditis elegans.